Consider the following 203-residue polypeptide: dITP/XTP pyrophosphatase (203 aa).

Substrate is bound at residue 8–13 (TANKGK). Mg(2+) contacts are provided by E41 and D70. D70 acts as the Proton acceptor in catalysis. Residues S71, 153 to 156 (FGYD), K176, and 181 to 182 (HR) each bind substrate.

This sequence belongs to the HAM1 NTPase family. As to quaternary structure, homodimer. Mg(2+) serves as cofactor.

It carries out the reaction XTP + H2O = XMP + diphosphate + H(+). The enzyme catalyses dITP + H2O = dIMP + diphosphate + H(+). The catalysed reaction is ITP + H2O = IMP + diphosphate + H(+). In terms of biological role, pyrophosphatase that catalyzes the hydrolysis of nucleoside triphosphates to their monophosphate derivatives, with a high preference for the non-canonical purine nucleotides XTP (xanthosine triphosphate), dITP (deoxyinosine triphosphate) and ITP. Seems to function as a house-cleaning enzyme that removes non-canonical purine nucleotides from the nucleotide pool, thus preventing their incorporation into DNA/RNA and avoiding chromosomal lesions. The chain is dITP/XTP pyrophosphatase from Listeria monocytogenes serovar 1/2a (strain ATCC BAA-679 / EGD-e).